The primary structure comprises 204 residues: MANQSRPKVKKSRALGIALTPKAVKYFEARPYPPGEHGRGRKQNSDYKVRLLEKQRLRAQYDVSERQLVRAYERAAKTQGKTGEALVIELERRLDALVLRSGIARTIYQARQMVVHGHIEVNGQKVDKPSFRVKPDDVVMVRERSRQKPLFEVAREGGFAPDGETPRYLQVNLRALAFRLDREPNRKEIPVICDEQLVVEYYAR.

The 66-residue stretch at 92–157 (RRLDALVLRS…KPLFEVAREG (66 aa)) folds into the S4 RNA-binding domain.

This sequence belongs to the universal ribosomal protein uS4 family. Part of the 30S ribosomal subunit. Contacts protein S5. The interaction surface between S4 and S5 is involved in control of translational fidelity.

Functionally, one of the primary rRNA binding proteins, it binds directly to 16S rRNA where it nucleates assembly of the body of the 30S subunit. In terms of biological role, with S5 and S12 plays an important role in translational accuracy. In Streptomyces avermitilis (strain ATCC 31267 / DSM 46492 / JCM 5070 / NBRC 14893 / NCIMB 12804 / NRRL 8165 / MA-4680), this protein is Small ribosomal subunit protein uS4.